Here is a 231-residue protein sequence, read N- to C-terminus: tRNA (guanine-N(1)-)-methyltransferase (231 aa).

S-adenosyl-L-methionine is bound at residue Gly-112.

This sequence belongs to the RNA methyltransferase TrmD family. In terms of assembly, homodimer.

It is found in the cytoplasm. It carries out the reaction guanosine(37) in tRNA + S-adenosyl-L-methionine = N(1)-methylguanosine(37) in tRNA + S-adenosyl-L-homocysteine + H(+). Specifically methylates guanosine-37 in various tRNAs. This chain is tRNA (guanine-N(1)-)-methyltransferase, found in Chlorobium chlorochromatii (strain CaD3).